The chain runs to 364 residues: 3-isopropylmalate dehydrogenase (364 aa).

77 to 90 (GPKWDNLPTDKRPE) is a binding site for NAD(+). 4 residues coordinate substrate: Arg97, Arg107, Arg135, and Asp224. Asp224, Asp248, and Asp252 together coordinate Mg(2+). 281–293 (GSAPDIAGKGIAN) is an NAD(+) binding site.

This sequence belongs to the isocitrate and isopropylmalate dehydrogenases family. LeuB type 1 subfamily. Homodimer. Mg(2+) serves as cofactor. Mn(2+) is required as a cofactor.

The protein localises to the cytoplasm. It carries out the reaction (2R,3S)-3-isopropylmalate + NAD(+) = 4-methyl-2-oxopentanoate + CO2 + NADH. It functions in the pathway amino-acid biosynthesis; L-leucine biosynthesis; L-leucine from 3-methyl-2-oxobutanoate: step 3/4. Its function is as follows. Catalyzes the oxidation of 3-carboxy-2-hydroxy-4-methylpentanoate (3-isopropylmalate) to 3-carboxy-4-methyl-2-oxopentanoate. The product decarboxylates to 4-methyl-2 oxopentanoate. In Aquifex aeolicus (strain VF5), this protein is 3-isopropylmalate dehydrogenase (leuB).